The following is a 219-amino-acid chain: MGVTILQPYPVENKSGAQTIEFLVKRVLALGAVQVGHFLVDCETYTSIPQIGATKTVHILHNSEQPASVFSILDTGTKQIPLVTDGLFDLLMTRISPVYTSKKQTKIESKGPRFEFGDFLIKLGSVTMSQNFKGVLVEVEYRPCLVASSCWELMREFLQGFLGSNVSNTIPAYFAQRININTNHTKANDVYQPIDTINQYLEHFTNYRKQTTPVVAPRV.

This sequence belongs to the Mediator complex subunit 20 family. As to quaternary structure, component of the Mediator complex.

Its subcellular location is the nucleus. Component of the Mediator complex, a coactivator involved in the regulated transcription of nearly all RNA polymerase II-dependent genes. Mediator functions as a bridge to convey information from gene-specific regulatory proteins to the basal RNA polymerase II transcription machinery. Mediator is recruited to promoters by direct interactions with regulatory proteins and serves as a scaffold for the assembly of a functional preinitiation complex with RNA polymerase II and the general transcription factors. The polypeptide is Mediator of RNA polymerase II transcription subunit 20 (MED20) (Aedes aegypti (Yellowfever mosquito)).